The primary structure comprises 277 residues: Coiled-coil domain-containing protein 117 (277 aa).

The segment at 22–69 is disordered; the sequence is SPPAFAGRAFPPGAAGHDLAPRPGVRGPPSSPDGRTARGRVSIHCRKK. Residues 23–55 are compositionally biased toward low complexity; it reads PPAFAGRAFPPGAAGHDLAPRPGVRGPPSSPDG. R47 is modified (omega-N-methylarginine). The residue at position 52 (S52) is a Phosphoserine. Basic residues predominate over residues 58-69; that stretch reads ARGRVSIHCRKK. A coiled-coil region spans residues 139–166; sequence QCEVARRRLQEIEDRIIDEDEEVESDRN. Disordered stretches follow at residues 216–242 and 255–277; these read LSEKPKPSSNPKNYMGESQTKHTATGT and QCTDTPLYHSLETAASTEEEMEL. The span at 225-242 shows a compositional bias: polar residues; the sequence is NPKNYMGESQTKHTATGT.

In terms of assembly, interacts with CIAO2B; the interaction is direct. Interacts with MMS19; the interaction is indirect.

Its subcellular location is the cytoplasm. It localises to the cytoskeleton. It is found in the spindle. The protein localises to the nucleus. In terms of biological role, facilitates DNA repair, cell cycle progression, and cell proliferation through its interaction with CIAO2B. This is Coiled-coil domain-containing protein 117 from Rattus norvegicus (Rat).